Consider the following 407-residue polypeptide: Argininosuccinate synthase (407 aa).

ATP contacts are provided by residues 16 to 24 (AYSGGLDTS) and alanine 44. Positions 96 and 101 each coordinate L-citrulline. ATP is bound at residue glycine 126. L-aspartate contacts are provided by threonine 128, asparagine 132, and aspartate 133. Asparagine 132 provides a ligand contact to L-citrulline. Positions 136, 185, 194, 270, and 282 each coordinate L-citrulline.

The protein belongs to the argininosuccinate synthase family. Type 1 subfamily. Homotetramer.

It localises to the cytoplasm. The enzyme catalyses L-citrulline + L-aspartate + ATP = 2-(N(omega)-L-arginino)succinate + AMP + diphosphate + H(+). It participates in amino-acid biosynthesis; L-arginine biosynthesis; L-arginine from L-ornithine and carbamoyl phosphate: step 2/3. The chain is Argininosuccinate synthase from Shewanella putrefaciens (strain CN-32 / ATCC BAA-453).